Reading from the N-terminus, the 375-residue chain is Succinyl-diaminopimelate desuccinylase (375 aa).

Histidine 66 serves as a coordination point for Zn(2+). Residue aspartate 68 is part of the active site. Aspartate 99 is a binding site for Zn(2+). Residue glutamate 133 is the Proton acceptor of the active site. Glutamate 134, glutamate 162, and histidine 348 together coordinate Zn(2+).

This sequence belongs to the peptidase M20A family. DapE subfamily. As to quaternary structure, homodimer. The cofactor is Zn(2+). Requires Co(2+) as cofactor.

The catalysed reaction is N-succinyl-(2S,6S)-2,6-diaminopimelate + H2O = (2S,6S)-2,6-diaminopimelate + succinate. It participates in amino-acid biosynthesis; L-lysine biosynthesis via DAP pathway; LL-2,6-diaminopimelate from (S)-tetrahydrodipicolinate (succinylase route): step 3/3. Its function is as follows. Catalyzes the hydrolysis of N-succinyl-L,L-diaminopimelic acid (SDAP), forming succinate and LL-2,6-diaminopimelate (DAP), an intermediate involved in the bacterial biosynthesis of lysine and meso-diaminopimelic acid, an essential component of bacterial cell walls. The polypeptide is Succinyl-diaminopimelate desuccinylase (Alkalilimnicola ehrlichii (strain ATCC BAA-1101 / DSM 17681 / MLHE-1)).